The chain runs to 450 residues: Cysteine protease ATG4C (450 aa).

Cysteine 112 functions as the Nucleophile in the catalytic mechanism. Catalysis depends on residues aspartate 336 and histidine 338.

Belongs to the peptidase C54 family.

It is found in the cytoplasm. It carries out the reaction [protein]-C-terminal L-amino acid-glycyl-phosphatidylethanolamide + H2O = [protein]-C-terminal L-amino acid-glycine + a 1,2-diacyl-sn-glycero-3-phosphoethanolamine. In terms of biological role, cysteine protease that plays a key role in autophagy by mediating both proteolytic activation and delipidation of ATG8 family proteins. The protease activity is required for proteolytic activation of ATG8 family proteins: cleaves the C-terminal amino acid of ATG8 proteins to reveal a C-terminal glycine. Exposure of the glycine at the C-terminus is essential for ATG8 proteins conjugation to phosphatidylethanolamine (PE) and insertion to membranes, which is necessary for autophagy. In addition to the protease activity, also mediates delipidation of ATG8 family proteins. Catalyzes delipidation of PE-conjugated forms of ATG8 proteins during macroautophagy. The chain is Cysteine protease ATG4C from Xenopus tropicalis (Western clawed frog).